A 703-amino-acid chain; its full sequence is MEEIKIETVVNGAPYSIETGYFAKQANGAVIVRQGDTAVLVAAVMSEEPQADIDFLPLTVEYREKYYAYGKIPGGFVKREGKPSEREILVARNIDRPIRPLFPKGFYNDVIITAYTLSADDQYDPDVLGIVGASAALHISDIPFEGPIAGVRVCRVDGQFIVNPTYQQKAKSDLEIVVAGSKDAIVMVEGGAKEVPEEVILEAMLFGHQEIKKLIELQEELRAKYGKEKIEIPIDEEEILLKEKFKELAYVRIKEAFNISDKKERNKQINAIFEEIKTTLEIPEEKVKKASFVYKDVVSNVMRDLVLYENIRIDGRKPEEIRPIWIKVGVFPRNHGSAIFTRGQTQAFVTVTLGSPSEGQIEESIEAGETLKRFMLHYNFPPFSTGEAKPPRPVSRREIGHGNLAERALEPLIPSEEEFPYVIRVVSDILESNGSTSMATVCGGSLALFDAGVPMKKHVAGIAMGLIKSEDKFVVLSDILGDEDHLGDMDFKVAGTRDGVTSIQMDIKVKGLTREILQKALEQAREGRNYILDLMYQAIPEPRKELSPYAPTVTTLRVLPEKISVIIGPAGKNIKKIIEETGVKIDLDPTGLVKIYATSKIAAEKAIDMINQLIMDIELGEVYLGKVTRVEDYGAFVELMPGKLSLLHVSQISSERLKSAKDVVKVGDVLKVKVSEIDDQGRIKVSLKDVPENVEAKNKFLFE.

Mg(2+) is bound by residues Asp484 and Asp490. One can recognise a KH domain in the interval Pro551–Ile610. Residues Gly620 to Lys688 form the S1 motif domain.

This sequence belongs to the polyribonucleotide nucleotidyltransferase family. The cofactor is Mg(2+).

The protein resides in the cytoplasm. It carries out the reaction RNA(n+1) + phosphate = RNA(n) + a ribonucleoside 5'-diphosphate. Functionally, involved in mRNA degradation. Catalyzes the phosphorolysis of single-stranded polyribonucleotides processively in the 3'- to 5'-direction. The chain is Polyribonucleotide nucleotidyltransferase from Sulfurihydrogenibium sp. (strain YO3AOP1).